We begin with the raw amino-acid sequence, 938 residues long: Protein SEY1 (938 aa).

The tract at residues 1–159 is disordered; that stretch reads MTSQSHGAPP…QKSAKSTPGS (159 aa). Residues 1–839 are Cytoplasmic-facing; that stretch reads MTSQSHGAPP…KRSTIQSTTQ (839 aa). The span at 33 to 45 shows a compositional bias: low complexity; sequence SVSSSHSSHSPVT. The span at 74–94 shows a compositional bias: pro residues; that stretch reads IAAPEPIAAPEPIPAPEPIAA. A compositionally biased stretch (basic and acidic residues) spans 100–118; it reads LKSEHKPVEREHKPVERKP. The segment covering 146–158 has biased composition (polar residues); it reads VPTSQKSAKSTPG. Residues 192 to 423 enclose the GB1/RHD3-type G domain; the sequence is GLDYHVVAVF…DPNYVFKPVY (232 aa). 202–209 provides a ligand contact to GTP; sequence GSQSTGKS. Residues 603-630 adopt a coiled-coil conformation; it reads SYDDTLAALEQELDTLRDHKSKVEIDRL. Residues 840 to 860 form a helical membrane-spanning segment; sequence IPLYMYGLLLLLGWNEIMAVL. Residues 861-863 are Lumenal-facing; that stretch reads RSP. A helical transmembrane segment spans residues 864 to 884; sequence VYFMFLLVAAGAAYVIHTLHL. Residues 885–938 lie on the Cytoplasmic side of the membrane; that stretch reads WGPLTHMTNTMIAEATDMAKAKLKQVLNEAPTGETREREAPVGSSRDDVELKDL. Positions 911 to 938 are disordered; the sequence is LNEAPTGETREREAPVGSSRDDVELKDL. A compositionally biased stretch (basic and acidic residues) spans 918 to 938; it reads ETREREAPVGSSRDDVELKDL.

The protein belongs to the TRAFAC class dynamin-like GTPase superfamily. GB1/RHD3 GTPase family. RHD3 subfamily.

The protein resides in the endoplasmic reticulum membrane. Functionally, cooperates with the reticulon proteins and tubule-shaping DP1 family proteins to generate and maintain the structure of the tubular endoplasmic reticulum network. Has GTPase activity, which is required for its function in ER organization. This chain is Protein SEY1, found in Yarrowia lipolytica (strain CLIB 122 / E 150) (Yeast).